The chain runs to 179 residues: Large ribosomal subunit protein uL10 (179 aa).

This sequence belongs to the universal ribosomal protein uL10 family. Part of the ribosomal stalk of the 50S ribosomal subunit. The N-terminus interacts with L11 and the large rRNA to form the base of the stalk. The C-terminus forms an elongated spine to which L12 dimers bind in a sequential fashion forming a multimeric L10(L12)X complex.

Forms part of the ribosomal stalk, playing a central role in the interaction of the ribosome with GTP-bound translation factors. The chain is Large ribosomal subunit protein uL10 from Kosmotoga olearia (strain ATCC BAA-1733 / DSM 21960 / TBF 19.5.1).